The following is a 492-amino-acid chain: MRRPPAPGAPRCLSWASSLFCSAASTLPGPLMAAKWFKEFPLTLKTASERARPGGAGGKPRKNSETGGAAPTPGKGRKNSAAELGASKASSGPPKDSRLSRDSLQGLIQAAAGKGRKNSRVTATATEEEPHRGAVTKSAGCSTYISRLIKVDTQEKNGKSAYPGGGSTSSSSSSSSSASSSPSSLGPELDKAKIMRQQDTVIILEDYADPYDAKRTKGQRDAERVGENDGYMEPYDAQQMITEIRRRGSKDPLVKALQLLDGPSEPGETVKVEATAKRRSSKDLLGKPPQLYDTPYEPSEGGQRVAEVKTRPADSRLPEEDDRPAAEYEQPWEWKREQIARALSVQFEGSDRPPGREDAGRPHHWQKTLKPTLSDHGDGEKVDPGLALEKQPWYHGSISRAEAESRLQPCKEAAYLVRNSESGNSKYSIALKTSQGCVHIIVAQTKDNKYTLNQTSAVFDSIPEVVHYYSNAKLPFKGAEHMTLLHPVHKLH.

4 disordered regions span residues 46 to 193 (TASE…DKAK), 214 to 236 (KRTK…EPYD), 260 to 332 (LDGP…EQPW), and 347 to 384 (FEGS…KVDP). Ser103 carries the phosphoserine modification. The span at 149–158 (IKVDTQEKNG) shows a compositional bias: basic and acidic residues. Positions 168 to 184 (TSSSSSSSSSASSSPSS) are enriched in low complexity. Composition is skewed to basic and acidic residues over residues 214 to 227 (KRTK…RVGE), 268 to 285 (ETVK…KDLL), 306 to 332 (AEVK…EQPW), 349 to 361 (GSDR…DAGR), and 373 to 383 (LSDHGDGEKVD). In terms of domain architecture, SH2 spans 393-488 (WYHGSISRAE…AEHMTLLHPV (96 aa)).

As to expression, expressed in heart, brain, lung and skeletal muscle.

In Mus musculus (Mouse), this protein is SH2 domain-containing adapter protein E (She).